The primary structure comprises 124 residues: Small ribosomal subunit protein uS12 (124 aa).

D89 is subject to 3-methylthioaspartic acid.

Belongs to the universal ribosomal protein uS12 family. As to quaternary structure, part of the 30S ribosomal subunit. Contacts proteins S8 and S17. May interact with IF1 in the 30S initiation complex.

With S4 and S5 plays an important role in translational accuracy. Functionally, interacts with and stabilizes bases of the 16S rRNA that are involved in tRNA selection in the A site and with the mRNA backbone. Located at the interface of the 30S and 50S subunits, it traverses the body of the 30S subunit contacting proteins on the other side and probably holding the rRNA structure together. The combined cluster of proteins S8, S12 and S17 appears to hold together the shoulder and platform of the 30S subunit. This Yersinia pestis (strain Pestoides F) protein is Small ribosomal subunit protein uS12.